The primary structure comprises 75 residues: Small ribosomal subunit protein bS18 (75 aa).

The protein belongs to the bacterial ribosomal protein bS18 family. Part of the 30S ribosomal subunit. Forms a tight heterodimer with protein bS6.

Functionally, binds as a heterodimer with protein bS6 to the central domain of the 16S rRNA, where it helps stabilize the platform of the 30S subunit. This is Small ribosomal subunit protein bS18 from Shewanella frigidimarina (strain NCIMB 400).